Reading from the N-terminus, the 1534-residue chain is ABC transporter G family member 6 (1534 aa).

A compositionally biased stretch (basic and acidic residues) spans 1 to 11; the sequence is MAKQDPKDKNS. The tract at residues 1–85 is disordered; it reads MAKQDPKDKN…ESNYDSDDEK (85 aa). Over residues 21-65 the composition is skewed to low complexity; the sequence is NNNNNENLDNDQELLNNNNNNNNNNNNNNNNNNNNNNNNNNNNNL. The ABC transporter 1 domain maps to 138 to 385; that stretch reads VYCRNATYTV…FKKLGFACPS (248 aa). An ATP-binding site is contributed by 177–184; the sequence is GTPGCGKS. Positions 481 to 757 constitute an ABC transmembrane type-2 1 domain; sequence RRNYYNFLTR…VVCFFALKYF (277 aa). The next 7 helical transmembrane spans lie at 486–506, 521–541, 566–586, 592–612, 625–645, 652–672, and 734–754; these read NFLT…TLYW, LLFF…NSFF, IICD…IVYW, PVFI…NLSL, IEIA…FSGF, IGGW…FQGL, and VVFG…FFAL. Residues 781 to 907 are disordered; the sequence is KQDEESAAIS…KSKNGKDIGS (127 aa). Over residues 797–808 the composition is skewed to acidic residues; the sequence is IDDDNDDDADYE. Positions 830–841 are enriched in polar residues; it reads SPSSLTTGSPYY. Positions 842–856 are enriched in low complexity; sequence NINNNNNNLSGSGNN. Residues 864–873 are compositionally biased toward polar residues; the sequence is TPSNLSPSVN. Residues 874–896 are compositionally biased toward low complexity; it reads SPITINSPMPTSPSNNNNNNNSN. The span at 897–906 shows a compositional bias: basic and acidic residues; the sequence is EKSKNGKDIG. Residues 924–1166 form the ABC transporter 2 domain; the sequence is VKVDDPDNPK…VILDYCDKLG (243 aa). 960–967 lines the ATP pocket; the sequence is GPSGAGKS. The ABC transmembrane type-2 2 domain occupies 1256–1529; the sequence is LRRPAIFVSN…GLSFWGFKKI (274 aa). The next 6 membrane-spanning stretches (helical) occupy residues 1261 to 1281, 1296 to 1316, 1345 to 1365, 1377 to 1397, 1404 to 1424, and 1506 to 1526; these read IFVS…TLFV, LLFF…PTTV, YPFT…IAGL, CLFI…CLAV, MAST…GFVI, and IDIA…FWGF.

Belongs to the ABC transporter superfamily. ABCG family. PDR (TC 3.A.1.205) subfamily.

The protein resides in the membrane. The protein is ABC transporter G family member 6 (abcG6) of Dictyostelium discoideum (Social amoeba).